A 310-amino-acid chain; its full sequence is 4-diphosphocytidyl-2-C-methyl-D-erythritol kinase (310 aa).

Lysine 11 is an active-site residue. Proline 95–alanine 105 contacts ATP. Residue aspartate 137 is part of the active site.

It belongs to the GHMP kinase family. IspE subfamily.

It carries out the reaction 4-CDP-2-C-methyl-D-erythritol + ATP = 4-CDP-2-C-methyl-D-erythritol 2-phosphate + ADP + H(+). It participates in isoprenoid biosynthesis; isopentenyl diphosphate biosynthesis via DXP pathway; isopentenyl diphosphate from 1-deoxy-D-xylulose 5-phosphate: step 3/6. Functionally, catalyzes the phosphorylation of the position 2 hydroxy group of 4-diphosphocytidyl-2C-methyl-D-erythritol. This Acaryochloris marina (strain MBIC 11017) protein is 4-diphosphocytidyl-2-C-methyl-D-erythritol kinase.